The sequence spans 478 residues: Noelin-2 (478 aa).

Residues 1–16 (MSVPLLKIGAVLSTMA) form the signal peptide. 7 N-linked (GlcNAc...) asparagine glycosylation sites follow: Asn33, Asn98, Asn179, Asn299, Asn334, Asn423, and Asn465. Coiled-coil stretches lie at residues 86-109 (SREL…LELR) and 160-218 (LEQY…QKLG). The region spanning 218-470 (GCGKLTGVSN…QVLYNVTLFH (253 aa)) is the Olfactomedin-like domain. Cys219 and Cys401 are oxidised to a cystine.

In terms of assembly, peripherally associated with AMPAR complex. AMPAR complex consists of an inner core made of 4 pore-forming GluA/GRIA proteins (GRIA1, GRIA2, GRIA3 and GRIA4) and 4 major auxiliary subunits arranged in a twofold symmetry. One of the two pairs of distinct binding sites is occupied either by CNIH2, CNIH3 or CACNG2, CACNG3. The other harbors CACNG2, CACNG3, CACNG4, CACNG8 or GSG1L. This inner core of AMPAR complex is complemented by outer core constituents binding directly to the GluA/GRIA proteins at sites distinct from the interaction sites of the inner core constituents. Outer core constituents include at least PRRT1, PRRT2, CKAMP44/SHISA9, FRRS1L and NRN1. The proteins of the inner and outer core serve as a platform for other, more peripherally associated AMPAR constituents, including OLFM2. Alone or in combination, these auxiliary subunits control the gating and pharmacology of the AMPAR complex and profoundly impact their biogenesis and protein processing. Interacts with GRIA2. Interacts with OLFM1 and OLFM3. Interacts with SRF; the interaction promotes dissociation of SRF from the transcriptional repressor HEY2. Interacts with RUNX2. In terms of tissue distribution, expressed in the brain (at protein level). Expressed in carotid arteries and the aorta, mainly in aortic SMCs.

It localises to the secreted. It is found in the synapse. The protein resides in the membrane. Its subcellular location is the nucleus. The protein localises to the cytoplasm. Involved in transforming growth factor beta (TGF-beta)-induced smooth muscle differentiation. TGF-beta induces expression and nuclear translocation of OLFM2 where it binds to SRF, causing its dissociation from the transcriptional repressor HEY2/HERP1 and facilitating binding of SRF to target genes. Plays a role in AMPAR complex organization. Is a regulator of vascular smooth-muscle cell (SMC) phenotypic switching, that acts by promoting RUNX2 and inhibiting MYOCD binding to SRF. SMC phenotypic switching is the process through which vascular SMCs undergo transition between a quiescent contractile phenotype and a proliferative synthetic phenotype in response to pathological stimuli. SMC phenotypic plasticity is essential for vascular development and remodeling. The polypeptide is Noelin-2 (Olfm2) (Rattus norvegicus (Rat)).